Reading from the N-terminus, the 456-residue chain is Frizzled/smoothened-like sans CRD protein F (456 aa).

A signal peptide spans 1–30 (MIFNNLKNQNKIINFLIIFYFLSFLKQIES). Residues 31-92 (QSINITSSSS…PFFTINEWNK (62 aa)) lie on the Extracellular side of the membrane. 3 N-linked (GlcNAc...) asparagine glycosylation sites follow: Asn-34, Asn-52, and Asn-70. Residues 93–113 (FLNMSLVMGTISFFSGLFLLV) traverse the membrane as a helical segment. Residues 114–127 (TYSPIVNKTHNRHT) lie on the Cytoplasmic side of the membrane. A helical membrane pass occupies residues 128 to 148 (IGVMCMSFGVCLAMCSDMWNF). The Extracellular segment spans residues 149 to 174 (GSNFTEKSICPSPGQYLSTSNARCLS). A glycan (N-linked (GlcNAc...) asparagine) is linked at Asn-151. Residues 175–195 (SGIFLQFGGVFGFLNWTLLSF) traverse the membrane as a helical segment. Residues 196–211 (DLFMNIKGIITKNYDK) lie on the Cytoplasmic side of the membrane. A helical transmembrane segment spans residues 212–232 (YYVSGTFIIAIIFTFVPIVND). Over 233–252 (QYSMSYIGLGCWLGSAMYQL) the chain is Extracellular. A helical membrane pass occupies residues 253 to 273 (IFFWILLSICLIVSSVFIILI). Over 274–297 (LKEVYIIIKLSKQKTSLKGNIRPL) the chain is Cytoplasmic. Residues 298 to 318 (ICISITGFAFFYMFFYYISIV) traverse the membrane as a helical segment. Residues 319-354 (VEGDYYERVLNEYTDCLMDPTKDISECKSPRMSVAS) lie on the Extracellular side of the membrane. A helical transmembrane segment spans residues 355 to 375 (EFVFLLCLRLLGIGAFIFYGI). Over 376-456 (NNKVKKIWLN…ESSLNSVDEI (81 aa)) the chain is Cytoplasmic. Residues 403–422 (ADNDKSNSNGSKVLYRTNNT) are disordered.

Belongs to the G-protein coupled receptor Fz/Smo family.

It is found in the membrane. The sequence is that of Frizzled/smoothened-like sans CRD protein F (fscF) from Dictyostelium discoideum (Social amoeba).